A 276-amino-acid chain; its full sequence is Undecaprenyl-diphosphatase 1 (276 aa).

Transmembrane regions (helical) follow at residues 1-21, 44-64, 87-107, 114-134, 150-170, 190-210, 222-242, and 251-271; these read MSLW…LFPV, QLLP…LWYF, GHLM…GLLL, VFHD…LLWL, LTFK…IPGF, AAEF…LLEL, DALL…RFLM, and LASF…WFMF.

Belongs to the UppP family.

It is found in the cell inner membrane. It catalyses the reaction di-trans,octa-cis-undecaprenyl diphosphate + H2O = di-trans,octa-cis-undecaprenyl phosphate + phosphate + H(+). In terms of biological role, catalyzes the dephosphorylation of undecaprenyl diphosphate (UPP). Confers resistance to bacitracin. The polypeptide is Undecaprenyl-diphosphatase 1 (Burkholderia pseudomallei (strain 1106a)).